A 701-amino-acid chain; its full sequence is Putative pectinesterase/pectinesterase inhibitor 43 (701 aa).

Residues 1–22 (MNKYVLLGVTALIMAMVICVEA) form the signal peptide. The pectinesterase inhibitor 43 stretch occupies residues 42 to 195 (MITKTTVSII…QHLTSNGLAI (154 aa)). 2 stretches are compositionally biased toward low complexity: residues 221 to 256 (GILG…VDSS) and 263 to 275 (SSSE…SSNN). Residues 221 to 351 (GILGSGSSRD…DPLRKLNPLN (131 aa)) form a disordered region. Residue Asn267 is glycosylated (N-linked (GlcNAc...) asparagine). Composition is skewed to polar residues over residues 276 to 287 (RPLDSSKNQQME) and 313 to 338 (QKST…SSEN). A pectinesterase 43 region spans residues 391 to 688 (NVVVAKDGSG…FAPGNFLRGN (298 aa)). Positions 467 and 497 each coordinate substrate. Catalysis depends on Asp520, which acts as the Proton donor; for pectinesterase activity. Cysteines 534 and 554 form a disulfide. Asp541 (nucleophile; for pectinesterase activity) is an active-site residue. Substrate is bound by residues Arg609 and Trp611. Asn637 is a glycosylation site (N-linked (GlcNAc...) asparagine).

This sequence in the N-terminal section; belongs to the PMEI family. It in the C-terminal section; belongs to the pectinesterase family. Expressed in flower buds.

The protein resides in the secreted. The protein localises to the cell wall. The enzyme catalyses [(1-&gt;4)-alpha-D-galacturonosyl methyl ester](n) + n H2O = [(1-&gt;4)-alpha-D-galacturonosyl](n) + n methanol + n H(+). It functions in the pathway glycan metabolism; pectin degradation; 2-dehydro-3-deoxy-D-gluconate from pectin: step 1/5. Its function is as follows. Acts in the modification of cell walls via demethylesterification of cell wall pectin. In Arabidopsis thaliana (Mouse-ear cress), this protein is Putative pectinesterase/pectinesterase inhibitor 43 (PME43).